A 107-amino-acid polypeptide reads, in one-letter code: Transcriptional regulator Rv3488 (107 aa).

Residues His-16, Glu-30, His-34, and His-101 each contribute to the Cd(2+) site.

As to quaternary structure, homodimer.

May have transcription regulation and metal-detoxifying functions through which it may enhance intracellular survival of mycobacteria. Binds to its own promoter region and to the Rv1999c promoter region. It displays strong affinity for cadmium ions, but can also bind zinc, manganese and nickel. Expression increases the intracellular survival of recombinant M.smegmatis in murine macrophage cell line and increases its tolerance to cadmium ions. This Mycobacterium tuberculosis (strain ATCC 25618 / H37Rv) protein is Transcriptional regulator Rv3488.